The following is a 149-amino-acid chain: MYIGSSMDIQTILEKTLPGLGYELVDFELTAQGTLRVFIDKESGITVEDCATVSNHLSRVFMVEDIDYKNLEISSPGLDRPLKKAADFVRFAGQNAKIKTRLPIDGQKNFIGKIEGCENDTVTVSFDGKTVQIELGNIDKARLRPEFKF.

This sequence belongs to the RimP family.

The protein localises to the cytoplasm. Its function is as follows. Required for maturation of 30S ribosomal subunits. The sequence is that of Ribosome maturation factor RimP from Neisseria meningitidis serogroup A / serotype 4A (strain DSM 15465 / Z2491).